The following is a 94-amino-acid chain: Large ribosomal subunit protein bL27 (94 aa).

A propeptide spanning residues 1 to 9 (MLKLNLQFF) is cleaved from the precursor. The disordered stretch occupies residues 12–32 (KKGVSSTKNGRDSESKRLGAK). Residues 20-32 (NGRDSESKRLGAK) show a composition bias toward basic and acidic residues.

It belongs to the bacterial ribosomal protein bL27 family. The N-terminus is cleaved by ribosomal processing cysteine protease Prp.

In Staphylococcus carnosus (strain TM300), this protein is Large ribosomal subunit protein bL27.